We begin with the raw amino-acid sequence, 644 residues long: 1-deoxy-D-xylulose-5-phosphate synthase (644 aa).

Thiamine diphosphate contacts are provided by residues histidine 78 and 120 to 122; that span reads GHA. Aspartate 149 is a binding site for Mg(2+). Thiamine diphosphate is bound by residues 150 to 151, asparagine 178, and glutamate 373; that span reads AA. Asparagine 178 contacts Mg(2+).

The protein belongs to the transketolase family. DXPS subfamily. As to quaternary structure, homodimer. The cofactor is Mg(2+). Thiamine diphosphate serves as cofactor.

It carries out the reaction D-glyceraldehyde 3-phosphate + pyruvate + H(+) = 1-deoxy-D-xylulose 5-phosphate + CO2. It functions in the pathway metabolic intermediate biosynthesis; 1-deoxy-D-xylulose 5-phosphate biosynthesis; 1-deoxy-D-xylulose 5-phosphate from D-glyceraldehyde 3-phosphate and pyruvate: step 1/1. In terms of biological role, catalyzes the acyloin condensation reaction between C atoms 2 and 3 of pyruvate and glyceraldehyde 3-phosphate to yield 1-deoxy-D-xylulose-5-phosphate (DXP). The protein is 1-deoxy-D-xylulose-5-phosphate synthase of Chlamydia felis (strain Fe/C-56) (Chlamydophila felis).